A 483-amino-acid polypeptide reads, in one-letter code: Coagulation factor X isoform 1 (483 aa).

The signal sequence occupies residues 1 to 20; the sequence is MAPQLLLCLILTFLWSLPEA. Residues 21–40 constitute a propeptide that is removed on maturation; that stretch reads ESNVFLKSKVANRFLQRTKR. One can recognise a Gla domain in the interval 41–86; sequence ANSLFEEFKSGNIERECIEERCSKEEAREAFEDDEKTETFWNVYVD. A 4-carboxyglutamate mark is found at glutamate 46, glutamate 47, glutamate 54, glutamate 56, glutamate 59, glutamate 60, glutamate 65, glutamate 66, glutamate 69, glutamate 72, and glutamate 75. Cysteine 57 and cysteine 62 are oxidised to a cystine. The EGF-like 1; calcium-binding domain maps to 86–122; the sequence is DGDQCSSNPCHYGGTCKDGIGSYTCTCLSGYEGKNCE. 11 disulfide bridges follow: cysteine 90/cysteine 101, cysteine 95/cysteine 110, cysteine 112/cysteine 121, cysteine 129/cysteine 140, cysteine 136/cysteine 149, cysteine 151/cysteine 164, cysteine 172/cysteine 345, cysteine 245/cysteine 250, cysteine 265/cysteine 281, cysteine 393/cysteine 407, and cysteine 418/cysteine 446. Serine 92 is a glycosylation site (O-linked (Hex...) serine). Aspartate 103 bears the (3R)-3-hydroxyaspartate mark. One can recognise an EGF-like 2 domain in the interval 125–165; the sequence is LYKSCRVDNGDCWHFCKPVQNGIQCSCAESYLLGEDGHSCV. The propeptide at 183–238 is activation peptide; that stretch reads EANLPDFQTDFSDDYDEIDENNFVETPTNFSGLVLTVQSQNATLLKKSDNPSPDIR. The region spanning 239–470 is the Peptidase S1 domain; the sequence is VVNGTDCKLG…FILWIKRIIR (232 aa). Catalysis depends on histidine 280, which acts as the Charge relay system. N-linked (GlcNAc...) asparagine glycosylation occurs at asparagine 283. The Charge relay system role is filled by aspartate 325. Serine 422 serves as the catalytic Charge relay system.

The protein belongs to the peptidase S1 family. In terms of assembly, heterodimer of a light chain and a heavy chain; disulfide-linked. Post-translationally, gamma-carboxyglutamate residues are formed by vitamin K dependent carboxylation. These residues are essential for the binding of calcium. In terms of processing, the activation peptide is cleaved by factor IXa (in the intrinsic pathway), or by factor VIIa (in the extrinsic pathway). The iron and 2-oxoglutarate dependent 3-hydroxylation of aspartate and asparagine is (R) stereospecific within EGF domains. As to expression, plasma; synthesized in the liver.

The protein resides in the secreted. It carries out the reaction Selective cleavage of Arg-|-Thr and then Arg-|-Ile bonds in prothrombin to form thrombin.. Its function is as follows. Factor Xa is a vitamin K-dependent glycoprotein that converts prothrombin to thrombin in the presence of factor Va, calcium and phospholipid during blood clotting. The polypeptide is Coagulation factor X isoform 1 (F10) (Pseudonaja textilis (Eastern brown snake)).